Here is a 680-residue protein sequence, read N- to C-terminus: Probable galacturonosyltransferase 3 (680 aa).

Over 1–6 the chain is Cytoplasmic; it reads MTTFST. Residues 7-27 form a helical; Signal-anchor for type II membrane protein membrane-spanning segment; that stretch reads CAAFLSLVVVLHAVHVGGAIL. The Lumenal portion of the chain corresponds to 28–680; the sequence is ESQAPHRELK…PYLRRCDINE (653 aa). Positions 118-146 are disordered; that stretch reads SFQNDTGMEDNASHSTTNQTDESENQFPN. N-linked (GlcNAc...) asparagine glycosylation is found at Asn121, Asn128, Asn135, Asn239, Asn386, Asn438, Asn545, Asn578, Asn610, and Asn631. The segment covering 130-145 has biased composition (polar residues); that stretch reads SHSTTNQTDESENQFP.

It belongs to the glycosyltransferase 8 family. As to expression, expressed in roots, inflorescences, siliques, leaves and stems.

It is found in the golgi apparatus membrane. Its pathway is glycan metabolism; pectin biosynthesis. In terms of biological role, may be involved in pectin and/or xylans biosynthesis in cell walls. This is Probable galacturonosyltransferase 3 (GAUT3) from Arabidopsis thaliana (Mouse-ear cress).